The sequence spans 343 residues: Anthranilate phosphoribosyltransferase (343 aa).

5-phospho-alpha-D-ribose 1-diphosphate contacts are provided by residues Gly84, 87–88, Thr92, 94–97, 112–120, and Ser124; these read GD, NIST, and KHGNRGVSS. Gly84 is an anthranilate binding site. Ser96 is a binding site for Mg(2+). Asn115 contacts anthranilate. Anthranilate is bound at residue Arg170. The Mg(2+) site is built by Asp229 and Glu230.

Belongs to the anthranilate phosphoribosyltransferase family. In terms of assembly, homodimer. It depends on Mg(2+) as a cofactor.

It catalyses the reaction N-(5-phospho-beta-D-ribosyl)anthranilate + diphosphate = 5-phospho-alpha-D-ribose 1-diphosphate + anthranilate. It participates in amino-acid biosynthesis; L-tryptophan biosynthesis; L-tryptophan from chorismate: step 2/5. In terms of biological role, catalyzes the transfer of the phosphoribosyl group of 5-phosphorylribose-1-pyrophosphate (PRPP) to anthranilate to yield N-(5'-phosphoribosyl)-anthranilate (PRA). The polypeptide is Anthranilate phosphoribosyltransferase (Burkholderia cenocepacia (strain ATCC BAA-245 / DSM 16553 / LMG 16656 / NCTC 13227 / J2315 / CF5610) (Burkholderia cepacia (strain J2315))).